The primary structure comprises 554 residues: 3-(3-hydroxy-phenyl)propionate/3-hydroxycinnamic acid hydroxylase (554 aa).

FAD contacts are provided by residues 17–46 (QVAIAGAGPVGLMMANYLGQMGIDVLVVEK) and 285–295 (FRIDRVLLAGD).

It belongs to the PheA/TfdB FAD monooxygenase family. FAD is required as a cofactor.

It carries out the reaction 3-(3-hydroxyphenyl)propanoate + NADH + O2 + H(+) = 3-(2,3-dihydroxyphenyl)propanoate + NAD(+) + H2O. The catalysed reaction is (2E)-3-(3-hydroxyphenyl)prop-2-enoate + NADH + O2 + H(+) = (2E)-3-(2,3-dihydroxyphenyl)prop-2-enoate + NAD(+) + H2O. It functions in the pathway aromatic compound metabolism; 3-phenylpropanoate degradation. Catalyzes the insertion of one atom of molecular oxygen into position 2 of the phenyl ring of 3-(3-hydroxyphenyl)propionate (3-HPP) and hydroxycinnamic acid (3HCI). The sequence is that of 3-(3-hydroxy-phenyl)propionate/3-hydroxycinnamic acid hydroxylase from Escherichia coli O81 (strain ED1a).